Here is an 891-residue protein sequence, read N- to C-terminus: Aconitate hydratase A (891 aa).

The [4Fe-4S] cluster site is built by C435, C501, and C504.

Belongs to the aconitase/IPM isomerase family. Monomer. Requires [4Fe-4S] cluster as cofactor.

It catalyses the reaction citrate = D-threo-isocitrate. The enzyme catalyses (2S,3R)-3-hydroxybutane-1,2,3-tricarboxylate = 2-methyl-cis-aconitate + H2O. The protein operates within carbohydrate metabolism; tricarboxylic acid cycle; isocitrate from oxaloacetate: step 2/2. It functions in the pathway organic acid metabolism; propanoate degradation. In terms of biological role, involved in the catabolism of short chain fatty acids (SCFA) via the tricarboxylic acid (TCA)(acetyl degradation route) and the 2-methylcitrate cycle I (propionate degradation route). Catalyzes the reversible isomerization of citrate to isocitrate via cis-aconitate. Also catalyzes the hydration of 2-methyl-cis-aconitate to yield (2R,3S)-2-methylisocitrate. The (2S,3S)-2-methylcitrate (2-MC) is a very poor substrate. The apo form of AcnA functions as a RNA-binding regulatory protein. The protein is Aconitate hydratase A (acnA) of Salmonella typhimurium (strain LT2 / SGSC1412 / ATCC 700720).